The sequence spans 631 residues: MSPNMSLTASHPQQPQPTPQSKAQLTRQACNRCHASKLKCLRPPGVTTSKSCIRCIKADTECVYDPPQRFGRPRQKSRPQPESVPPRIEAREPEVTDPRRARHGSTIGARWESSERESNGSLAPSSAAESPYTAAESPDNRSSAAVAAAPLVGMDYASSHFPEPLESERTSELLDAFQSESMQLDVDSYWGETDPVMPPAATVPYSDLLTGPIDLDFTVSDQDDRAKIPKHALDPALSGADTGSTADDYVLDLVQLQASVNQNNRELAAMIRKAQSALGMSDGRVGQALPIPDSQFKTHLQRNLKASEQTLDVLHRINSQFAPVSRETRPPSRSYGLDPTLDRLYADCVSQDHAFGVGGDELGVRATTPPGVSAADPQHSILAFLVLTTYLRLLHNFDALISILQDRLRCSASLDPRRPLHLSEDISASDSSSNPLLDVSLGSFSFSSSSARSLQAMLNVQMINTVLTKIKSSTQRMLLGPDYLPPSSCSSSASTSSTASTTSCSTRAPPSSATGGAHHPATAGSIFFHHAHSHSHSSSDHLFSQPEGRGYAPYNHAFHPPPPSRHTHNYPTPETITPPSSVLGGVSGTTPPPFVSGVDHVVRRALTEVQELELSLRNRARAIQQWSEEGF.

Residues 1 to 11 show a composition bias toward polar residues; it reads MSPNMSLTASH. The tract at residues 1 to 28 is disordered; the sequence is MSPNMSLTASHPQQPQPTPQSKAQLTRQ. The zn(2)-C6 fungal-type DNA-binding region spans 30–62; that stretch reads CNRCHASKLKCLRPPGVTTSKSCIRCIKADTEC. Disordered regions lie at residues 64 to 141, 489 to 522, and 536 to 573; these read YDPP…PDNR, CSSS…HPAT, and HSSS…YPTP. Over residues 88-99 the composition is skewed to basic and acidic residues; it reads IEAREPEVTDPR. Residues 119 to 128 are compositionally biased toward polar residues; the sequence is NGSLAPSSAA.

The protein resides in the nucleus. In terms of biological role, transcription factor that positively regulates the expression of the cluster that mediates the biosynthesis of acurin A, a highly reduced polyketide coupled to a serine via a peptide bond. The sequence is that of Acurin A biosynthesis cluster transcription regulator from Aspergillus aculeatus (strain ATCC 16872 / CBS 172.66 / WB 5094).